The sequence spans 119 residues: Large ribosomal subunit protein bL20 (119 aa).

Belongs to the bacterial ribosomal protein bL20 family.

Its function is as follows. Binds directly to 23S ribosomal RNA and is necessary for the in vitro assembly process of the 50S ribosomal subunit. It is not involved in the protein synthesizing functions of that subunit. This Acidovorax ebreus (strain TPSY) (Diaphorobacter sp. (strain TPSY)) protein is Large ribosomal subunit protein bL20.